The chain runs to 460 residues: Ribosomal protein uS12 methylthiotransferase RimO (460 aa).

Residues 16 to 130 form the MTTase N-terminal domain; the sequence is NKIHFISLGC…ILSAIESKEA (115 aa). Residues Cys-25, Cys-61, Cys-93, Cys-164, Cys-168, and Cys-171 each coordinate [4Fe-4S] cluster. Residues 150–382 enclose the Radical SAM core domain; the sequence is STPKHYAYLK…SQTQKKNVEK (233 aa). The TRAM domain maps to 385 to 455; it reads KQLVGQIVEA…GYDLVGRVIK (71 aa).

Belongs to the methylthiotransferase family. RimO subfamily. [4Fe-4S] cluster is required as a cofactor.

It localises to the cytoplasm. The enzyme catalyses L-aspartate(89)-[ribosomal protein uS12]-hydrogen + (sulfur carrier)-SH + AH2 + 2 S-adenosyl-L-methionine = 3-methylsulfanyl-L-aspartate(89)-[ribosomal protein uS12]-hydrogen + (sulfur carrier)-H + 5'-deoxyadenosine + L-methionine + A + S-adenosyl-L-homocysteine + 2 H(+). Functionally, catalyzes the methylthiolation of an aspartic acid residue of ribosomal protein uS12. In Chlamydia caviae (strain ATCC VR-813 / DSM 19441 / 03DC25 / GPIC) (Chlamydophila caviae), this protein is Ribosomal protein uS12 methylthiotransferase RimO.